The following is a 180-amino-acid chain: dCTP deaminase, dUMP-forming (180 aa).

DCTP is bound by residues 100-105 (RSSLGR), Asp-117, 125-127 (TLE), Gln-146, Tyr-160, and Gln-167. Catalysis depends on Glu-127, which acts as the Proton donor/acceptor.

Belongs to the dCTP deaminase family. Homotrimer.

The catalysed reaction is dCTP + 2 H2O = dUMP + NH4(+) + diphosphate. It participates in pyrimidine metabolism; dUMP biosynthesis; dUMP from dCTP: step 1/1. Its function is as follows. Bifunctional enzyme that catalyzes both the deamination of dCTP to dUTP and the hydrolysis of dUTP to dUMP without releasing the toxic dUTP intermediate. The chain is dCTP deaminase, dUMP-forming from Persephonella marina (strain DSM 14350 / EX-H1).